The sequence spans 366 residues: Uroporphyrinogen decarboxylase (366 aa).

Residues 28–32 (RQAGR), Asp78, Tyr160, Thr215, and His333 each bind substrate.

It belongs to the uroporphyrinogen decarboxylase family. As to quaternary structure, homodimer.

It localises to the cytoplasm. It carries out the reaction uroporphyrinogen III + 4 H(+) = coproporphyrinogen III + 4 CO2. It functions in the pathway porphyrin-containing compound metabolism; protoporphyrin-IX biosynthesis; coproporphyrinogen-III from 5-aminolevulinate: step 4/4. Its function is as follows. Catalyzes the decarboxylation of four acetate groups of uroporphyrinogen-III to yield coproporphyrinogen-III. The polypeptide is Uroporphyrinogen decarboxylase (Paraburkholderia phytofirmans (strain DSM 17436 / LMG 22146 / PsJN) (Burkholderia phytofirmans)).